Reading from the N-terminus, the 144-residue chain is Large ribosomal subunit protein uL16 (144 aa).

A compositionally biased stretch (basic residues) spans 1 to 19 (MLLPKRVKYRRQHRPKTTG). Residues 1 to 23 (MLLPKRVKYRRQHRPKTTGRSKG) form a disordered region.

It belongs to the universal ribosomal protein uL16 family. In terms of assembly, part of the 50S ribosomal subunit.

Functionally, binds 23S rRNA and is also seen to make contacts with the A and possibly P site tRNAs. The polypeptide is Large ribosomal subunit protein uL16 (Staphylococcus carnosus (strain TM300)).